The primary structure comprises 297 residues: Polyhedral envelope protein (297 aa).

It belongs to the baculoviridae PE family.

The protein localises to the virion membrane. Its function is as follows. Major component of the polyhedra envelope. This chain is Polyhedral envelope protein, found in Orgyia pseudotsugata (Douglas-fir tussock moth).